Consider the following 704-residue polypeptide: Elongation factor G (704 aa).

The region spanning 8-290 is the tr-type G domain; it reads ARYRNIGISA…AVIEYLPAPT (283 aa). GTP is bound by residues 17-24, 88-92, and 142-145; these read AHIDAGKT, DTPGH, and NKMD.

The protein belongs to the TRAFAC class translation factor GTPase superfamily. Classic translation factor GTPase family. EF-G/EF-2 subfamily.

The protein localises to the cytoplasm. Functionally, catalyzes the GTP-dependent ribosomal translocation step during translation elongation. During this step, the ribosome changes from the pre-translocational (PRE) to the post-translocational (POST) state as the newly formed A-site-bound peptidyl-tRNA and P-site-bound deacylated tRNA move to the P and E sites, respectively. Catalyzes the coordinated movement of the two tRNA molecules, the mRNA and conformational changes in the ribosome. This chain is Elongation factor G, found in Proteus mirabilis (strain HI4320).